The sequence spans 333 residues: Ketol-acid reductoisomerase (NADP(+)) (333 aa).

A KARI N-terminal Rossmann domain is found at 1–179 (MFYDDNADLS…GGTRAGVIKT (179 aa)). NADP(+)-binding positions include 22–25 (YGSQ), Ser-48, Ser-50, and 80–83 (DTAQ). Residue His-105 is part of the active site. Position 131 (Gly-131) interacts with NADP(+). The KARI C-terminal knotted domain occupies 180–325 (TFKDETETDL…KKLRDLMSWV (146 aa)). Asp-188, Glu-192, Glu-224, and Glu-228 together coordinate Mg(2+). Ser-249 is a binding site for substrate.

Belongs to the ketol-acid reductoisomerase family. It depends on Mg(2+) as a cofactor.

The catalysed reaction is (2R)-2,3-dihydroxy-3-methylbutanoate + NADP(+) = (2S)-2-acetolactate + NADPH + H(+). The enzyme catalyses (2R,3R)-2,3-dihydroxy-3-methylpentanoate + NADP(+) = (S)-2-ethyl-2-hydroxy-3-oxobutanoate + NADPH + H(+). Its pathway is amino-acid biosynthesis; L-isoleucine biosynthesis; L-isoleucine from 2-oxobutanoate: step 2/4. The protein operates within amino-acid biosynthesis; L-valine biosynthesis; L-valine from pyruvate: step 2/4. Involved in the biosynthesis of branched-chain amino acids (BCAA). Catalyzes an alkyl-migration followed by a ketol-acid reduction of (S)-2-acetolactate (S2AL) to yield (R)-2,3-dihydroxy-isovalerate. In the isomerase reaction, S2AL is rearranged via a Mg-dependent methyl migration to produce 3-hydroxy-3-methyl-2-ketobutyrate (HMKB). In the reductase reaction, this 2-ketoacid undergoes a metal-dependent reduction by NADPH to yield (R)-2,3-dihydroxy-isovalerate. The protein is Ketol-acid reductoisomerase (NADP(+)) of Mycobacterium leprae (strain TN).